The sequence spans 475 residues: MAAYFLLGLYGSTLVYRLIFHPLNRFPGPLAARISDLWLCTQLGGHDMHHLSERLSKRYGEFVRIGSSTLMLTHPKAVAAIYGPGSPCRKGTFYDLEQPNRGIATRDESLHAGRRRVWSRGFGDKALRTYEPRVAAYVHMLLGRLADARGKPVDMARLAEAFAFDTMGDLGLGADFGMLRQARTHEAVEQLVQGMTIMGRRLPMWLMRLLIDVAQALVPTAATTGFLGFCHHHLDRFMADPRRSERPSLMAPLLSHYEKQNIADRDLSILRNDCRFIIIAGSDTVAATLTFAFFYLAKHPGHVTRLREELFPLRAADGTFSHQRIFDAPHLNAVINETLRLHPPASTIPRVTPPQGLVVADTFIPGDMTVFSSQYALGRSEAIYSKASDFIPERWCSRPDLIKDGSAYAPFSIGHHSCLGRPLALMEMRLVLAETLSRFDIAFAPGFDANHFLQHVHDCMSWHIGKLGLTFTAIE.

A signal peptide spans 1 to 17 (MAAYFLLGLYGSTLVYR). Residues 276–296 (FIIIAGSDTVAATLTFAFFYL) form a helical membrane-spanning segment. N336 carries N-linked (GlcNAc...) asparagine glycosylation. C418 contributes to the heme binding site.

The protein belongs to the cytochrome P450 family. It depends on heme as a cofactor.

It is found in the membrane. It catalyses the reaction betaenone A + NADPH + O2 + H(+) = stemphyloxin II + NADP(+) + H2O. The enzyme catalyses betaenone C + NADPH + O2 + H(+) = stemphyloxin I + NADP(+) + H2O. The protein operates within mycotoxin biosynthesis. Its function is as follows. Cytochrome P450 monooxygenase; part of the gene cluster that mediates the biosynthesis of the phytotoxin stemphyloxin II. The first step of the pathway is the synthesis of dehydroprobetaenone I by the polyketide synthase sthA and the enoyl reductase sthE via condensation of one acetyl-CoA starter unit with 7 malonyl-CoA units and 5 methylations. The C-terminal reductase (R) domain of sthA catalyzes the reductive release of the polyketide chain. Because sthA lacks a designated enoylreductase (ER) domain, the required activity is provided the enoyl reductase sthE. The short-chain dehydrogenase/reductase sthC then catalyzes reduction of dehydroprobetaenone I to probetaenone I. The cytochrome P450 monooxygenase sthF catalyzes successive epoxidation, oxidation (resulting from epoxide opening) and hydroxylation to install a tertiary alcohol in the decaline ring to yield betaenone C from dehydroprobetaenone I and betaenone B from probetaenone I. The FAD-linked oxidoreductase sthB is responsible for the conversion of betaenone C to betaenone A via an intramolecular aldol reaction between C-1 and C-17 to form the bridged tricyclic system in betaenone A. Finally, the cytochrome P450 monooxygenase sthD catalyzes the hydroxylation of C-15 to afford the final metabolite stemphyloxin II. The polypeptide is Cytochrome P450 monooxygenase sthD (Phaeosphaeria nodorum (strain SN15 / ATCC MYA-4574 / FGSC 10173) (Glume blotch fungus)).